The sequence spans 447 residues: Eukaryotic translation initiation factor 3 subunit E (447 aa).

One can recognise a PCI domain in the interval 253 to 421 (LELFFNAGYI…GTVVMNHPPS (169 aa)).

Belongs to the eIF-3 subunit E family. As to quaternary structure, component of the eukaryotic translation initiation factor 3 (eIF-3) complex.

Its subcellular location is the cytoplasm. In terms of biological role, component of the eukaryotic translation initiation factor 3 (eIF-3) complex, which is involved in protein synthesis of a specialized repertoire of mRNAs and, together with other initiation factors, stimulates binding of mRNA and methionyl-tRNAi to the 40S ribosome. The eIF-3 complex specifically targets and initiates translation of a subset of mRNAs involved in cell proliferation. In Chaetomium globosum (strain ATCC 6205 / CBS 148.51 / DSM 1962 / NBRC 6347 / NRRL 1970) (Soil fungus), this protein is Eukaryotic translation initiation factor 3 subunit E.